We begin with the raw amino-acid sequence, 343 residues long: Phosphoribosylformylglycinamidine cyclo-ligase (343 aa).

Belongs to the AIR synthase family.

Its subcellular location is the cytoplasm. It carries out the reaction 2-formamido-N(1)-(5-O-phospho-beta-D-ribosyl)acetamidine + ATP = 5-amino-1-(5-phospho-beta-D-ribosyl)imidazole + ADP + phosphate + H(+). The protein operates within purine metabolism; IMP biosynthesis via de novo pathway; 5-amino-1-(5-phospho-D-ribosyl)imidazole from N(2)-formyl-N(1)-(5-phospho-D-ribosyl)glycinamide: step 2/2. In Thermodesulfovibrio yellowstonii (strain ATCC 51303 / DSM 11347 / YP87), this protein is Phosphoribosylformylglycinamidine cyclo-ligase.